The sequence spans 283 residues: Bifunctional protein FolD (283 aa).

Residues 163–165 (GRS), serine 188, and isoleucine 229 each bind NADP(+).

The protein belongs to the tetrahydrofolate dehydrogenase/cyclohydrolase family. In terms of assembly, homodimer.

It catalyses the reaction (6R)-5,10-methylene-5,6,7,8-tetrahydrofolate + NADP(+) = (6R)-5,10-methenyltetrahydrofolate + NADPH. It carries out the reaction (6R)-5,10-methenyltetrahydrofolate + H2O = (6R)-10-formyltetrahydrofolate + H(+). It participates in one-carbon metabolism; tetrahydrofolate interconversion. In terms of biological role, catalyzes the oxidation of 5,10-methylenetetrahydrofolate to 5,10-methenyltetrahydrofolate and then the hydrolysis of 5,10-methenyltetrahydrofolate to 10-formyltetrahydrofolate. This is Bifunctional protein FolD from Latilactobacillus sakei subsp. sakei (strain 23K) (Lactobacillus sakei subsp. sakei).